The sequence spans 193 residues: Crossover junction endodeoxyribonuclease RuvC (193 aa).

Residues D7, E68, and D141 contribute to the active site. 3 residues coordinate Mg(2+): D7, E68, and D141.

It belongs to the RuvC family. In terms of assembly, homodimer which binds Holliday junction (HJ) DNA. The HJ becomes 2-fold symmetrical on binding to RuvC with unstacked arms; it has a different conformation from HJ DNA in complex with RuvA. In the full resolvosome a probable DNA-RuvA(4)-RuvB(12)-RuvC(2) complex forms which resolves the HJ. Requires Mg(2+) as cofactor.

The protein resides in the cytoplasm. The catalysed reaction is Endonucleolytic cleavage at a junction such as a reciprocal single-stranded crossover between two homologous DNA duplexes (Holliday junction).. Functionally, the RuvA-RuvB-RuvC complex processes Holliday junction (HJ) DNA during genetic recombination and DNA repair. Endonuclease that resolves HJ intermediates. Cleaves cruciform DNA by making single-stranded nicks across the HJ at symmetrical positions within the homologous arms, yielding a 5'-phosphate and a 3'-hydroxyl group; requires a central core of homology in the junction. The consensus cleavage sequence is 5'-(A/T)TT(C/G)-3'. Cleavage occurs on the 3'-side of the TT dinucleotide at the point of strand exchange. HJ branch migration catalyzed by RuvA-RuvB allows RuvC to scan DNA until it finds its consensus sequence, where it cleaves and resolves the cruciform DNA. This chain is Crossover junction endodeoxyribonuclease RuvC, found in Bifidobacterium adolescentis (strain ATCC 15703 / DSM 20083 / NCTC 11814 / E194a).